The chain runs to 341 residues: Mitochondrial ubiquitin ligase activator of nfkb 1-A (341 aa).

Over 1–5 (MEDFP) the chain is Cytoplasmic. A helical membrane pass occupies residues 6–26 (VLEMVCLGSSVALSGLFYYIY). The Mitochondrial intermembrane portion of the chain corresponds to 27-233 (RKKRKTVDKL…LLMEQEGQAE (207 aa)). The chain crosses the membrane as a helical span at residues 234-254 (VWRVFACICALAGVAVLIWTG). The Cytoplasmic portion of the chain corresponds to 255–341 (RRYYRQLKLR…IKRVVPLYQA (87 aa)). The RING-type zinc-finger motif lies at 292-329 (CVICLSNPRGCVLLDCGHVCCCFRCYQALPQPFCPICR).

In terms of assembly, homooligomer.

It localises to the mitochondrion outer membrane. It carries out the reaction S-ubiquitinyl-[E2 ubiquitin-conjugating enzyme]-L-cysteine + [acceptor protein]-L-lysine = [E2 ubiquitin-conjugating enzyme]-L-cysteine + N(6)-ubiquitinyl-[acceptor protein]-L-lysine.. Its pathway is protein modification; protein ubiquitination. In terms of biological role, E3 ubiquitin-protein ligase that plays a role in the control of mitochondrial morphology. Promotes mitochondrial fragmentation and influences mitochondrial localization. Inhibits cell growth. E3 ubiquitin ligases accept ubiquitin from an E2 ubiquitin-conjugating enzyme in the form of a thioester and then directly transfer the ubiquitin to targeted substrates. The sequence is that of Mitochondrial ubiquitin ligase activator of nfkb 1-A (mul1a) from Danio rerio (Zebrafish).